A 643-amino-acid polypeptide reads, in one-letter code: Phosphomethylpyrimidine synthase (643 aa).

Residues Asn-248, Met-277, Tyr-306, His-342, 362-364 (SRG), 403-406 (DGLR), and Glu-442 contribute to the substrate site. His-446 serves as a coordination point for Zn(2+). Position 469 (Tyr-469) interacts with substrate. His-510 lines the Zn(2+) pocket. The [4Fe-4S] cluster site is built by Cys-590, Cys-593, and Cys-598.

This sequence belongs to the ThiC family. As to quaternary structure, homodimer. The cofactor is [4Fe-4S] cluster.

It catalyses the reaction 5-amino-1-(5-phospho-beta-D-ribosyl)imidazole + S-adenosyl-L-methionine = 4-amino-2-methyl-5-(phosphooxymethyl)pyrimidine + CO + 5'-deoxyadenosine + formate + L-methionine + 3 H(+). It functions in the pathway cofactor biosynthesis; thiamine diphosphate biosynthesis. Catalyzes the synthesis of the hydroxymethylpyrimidine phosphate (HMP-P) moiety of thiamine from aminoimidazole ribotide (AIR) in a radical S-adenosyl-L-methionine (SAM)-dependent reaction. This Paraburkholderia phytofirmans (strain DSM 17436 / LMG 22146 / PsJN) (Burkholderia phytofirmans) protein is Phosphomethylpyrimidine synthase.